A 197-amino-acid polypeptide reads, in one-letter code: Suppressor of RNA silencing p3 (197 aa).

It belongs to the tenuiviruses p3 protein family. As to quaternary structure, homodimer.

It localises to the host cytoplasm. Acts as a suppressor of RNA-mediated gene silencing, also known as post-transcriptional gene silencing (PTGS), presumably through the binding of dsRNA. The protein is Suppressor of RNA silencing p3 of Rottboellia (Sorghum).